Here is a 178-residue protein sequence, read N- to C-terminus: Fatty-acid and retinol-binding protein 1 (178 aa).

A signal peptide spans 1 to 16 (MYHQLILMALIGVIMA). Residues N44 and N75 are each glycosylated (N-linked (GlcNAc...) asparagine). 2 coiled-coil regions span residues 67-89 (DAAL…ELRN) and 123-154 (KLDM…LKAT). N157 carries N-linked (GlcNAc...) asparagine glycosylation.

The protein belongs to the fatty-acid and retinol-binding protein (FARBP) family. N-glycosylated.

Its subcellular location is the secreted. Functionally, binds retinol and different fatty acids. In Onchocerca gutturosa, this protein is Fatty-acid and retinol-binding protein 1.